The chain runs to 49 residues: Sperm protamine P1 (49 aa).

The protein belongs to the protamine P1 family. As to expression, testis.

Its subcellular location is the nucleus. It is found in the chromosome. In terms of biological role, protamines substitute for histones in the chromatin of sperm during the haploid phase of spermatogenesis. They compact sperm DNA into a highly condensed, stable and inactive complex. The sequence is that of Sperm protamine P1 (PRM1) from Rhinopoma hardwickii (Lesser mouse-tailed bat).